Consider the following 159-residue polypeptide: Phosphopantetheine adenylyltransferase (159 aa).

Ser9 lines the substrate pocket. Residues 9–10 and His17 contribute to the ATP site; that span reads SF. The substrate site is built by Lys41, Leu73, and Lys87. ATP contacts are provided by residues 88-90, Glu98, and 123-129; these read GLR and YSYLSSS.

The protein belongs to the bacterial CoaD family. In terms of assembly, homohexamer. Mg(2+) serves as cofactor.

Its subcellular location is the cytoplasm. It catalyses the reaction (R)-4'-phosphopantetheine + ATP + H(+) = 3'-dephospho-CoA + diphosphate. Its pathway is cofactor biosynthesis; coenzyme A biosynthesis; CoA from (R)-pantothenate: step 4/5. In terms of biological role, reversibly transfers an adenylyl group from ATP to 4'-phosphopantetheine, yielding dephospho-CoA (dPCoA) and pyrophosphate. This chain is Phosphopantetheine adenylyltransferase, found in Clostridium botulinum (strain Alaska E43 / Type E3).